We begin with the raw amino-acid sequence, 293 residues long: Triosephosphate isomerase (293 aa).

25 to 27 (NWK) is a substrate binding site. His117 acts as the Electrophile in catalysis. The Proton acceptor role is filled by Glu218.

Belongs to the triosephosphate isomerase family. Homodimer.

Its subcellular location is the cytoplasm. The enzyme catalyses D-glyceraldehyde 3-phosphate = dihydroxyacetone phosphate. Its pathway is carbohydrate biosynthesis; gluconeogenesis. It participates in carbohydrate degradation; glycolysis; D-glyceraldehyde 3-phosphate from glycerone phosphate: step 1/1. Functionally, involved in the gluconeogenesis. Catalyzes stereospecifically the conversion of dihydroxyacetone phosphate (DHAP) to D-glyceraldehyde-3-phosphate (G3P). This is Triosephosphate isomerase from Tropheryma whipplei (strain TW08/27) (Whipple's bacillus).